The sequence spans 674 residues: DNA ligase (674 aa).

NAD(+) contacts are provided by residues 42 to 46 (DNVYD), 91 to 92 (SM), and Glu121. Lys123 functions as the N6-AMP-lysine intermediate in the catalytic mechanism. 4 residues coordinate NAD(+): Arg144, Glu178, Lys294, and Lys318. The Zn(2+) site is built by Cys412, Cys415, Cys430, and Cys435. The 79-residue stretch at 596-674 (VKDSFVAGKT…ETELLANLKD (79 aa)) folds into the BRCT domain.

This sequence belongs to the NAD-dependent DNA ligase family. LigA subfamily. Requires Mg(2+) as cofactor. Mn(2+) serves as cofactor.

The enzyme catalyses NAD(+) + (deoxyribonucleotide)n-3'-hydroxyl + 5'-phospho-(deoxyribonucleotide)m = (deoxyribonucleotide)n+m + AMP + beta-nicotinamide D-nucleotide.. Functionally, DNA ligase that catalyzes the formation of phosphodiester linkages between 5'-phosphoryl and 3'-hydroxyl groups in double-stranded DNA using NAD as a coenzyme and as the energy source for the reaction. It is essential for DNA replication and repair of damaged DNA. This Lacticaseibacillus paracasei (strain ATCC 334 / BCRC 17002 / CCUG 31169 / CIP 107868 / KCTC 3260 / NRRL B-441) (Lactobacillus paracasei) protein is DNA ligase.